A 92-amino-acid chain; its full sequence is RNA-binding protein Hfq (92 aa).

Residues 9 to 68 (DPFLNALRRERVPVSIYLVNGIKLQGQVESFDQFVILLKNTVSQMVYKHAISTVVPARPF) form the Sm domain. The disordered stretch occupies residues 68–92 (FNVSSHHNTPNQAAGYNASHDDSAE). Residues 69–81 (NVSSHHNTPNQAA) show a composition bias toward polar residues.

The protein belongs to the Hfq family. In terms of assembly, homohexamer.

RNA chaperone that binds small regulatory RNA (sRNAs) and mRNAs to facilitate mRNA translational regulation in response to envelope stress, environmental stress and changes in metabolite concentrations. Also binds with high specificity to tRNAs. The protein is RNA-binding protein Hfq of Shewanella loihica (strain ATCC BAA-1088 / PV-4).